Reading from the N-terminus, the 283-residue chain is MNDSILLGLIGQGLDLSRTPAMHEAEGLAQGRATVYRRIDTLGSRASGQDLKTLLDAALYLGFNGLNITHPYKQAVLPLLDEVSEQATQLGAVNTVVIDANGHTTGHNTDVSGFGRGMEEGLPNAKLDSVVQVGAGGVGNAVAYALVTHGVQKLQVADLDTSRAQALADVINNAVGREAVVGVDARGIEDVIAAADGVVNATPMGMPAHPGTAFDVSCLTKDHWVGDVVYMPIETELLKAARALGCETLDGTRMAIHQAVDAFRLFTGLEPDVSRMRETFLSL.

Shikimate-binding residues include serine 17, threonine 69, lysine 73, asparagine 94, and aspartate 110. Residues 17 to 19, threonine 69, lysine 73, asparagine 94, and aspartate 110 contribute to the L-quinate site; that span reads SRT. Lysine 73 functions as the Proton acceptor in the catalytic mechanism. NAD(+) is bound by residues 137 to 138, aspartate 158, arginine 163, 203 to 206, alanine 213, valine 228, and glycine 251; these read GV and PMGM. Glutamine 258 provides a ligand contact to shikimate. Glutamine 258 contacts L-quinate.

It belongs to the shikimate dehydrogenase family. In terms of assembly, homodimer.

The enzyme catalyses L-quinate + NAD(+) = 3-dehydroquinate + NADH + H(+). It catalyses the reaction shikimate + NAD(+) = 3-dehydroshikimate + NADH + H(+). It participates in metabolic intermediate biosynthesis; chorismate biosynthesis; chorismate from D-erythrose 4-phosphate and phosphoenolpyruvate: step 4/7. It functions in the pathway aromatic compound metabolism; 3,4-dihydroxybenzoate biosynthesis; 3-dehydroquinate from D-quinate (NAD(+) route). Its function is as follows. Involved in the biosynthesis of the chorismate, which leads to the biosynthesis of aromatic amino acids, and plays a key role in the quinate degradation pathway. Catalyzes the NAD(+)-dependent oxidation of both quinate and shikimate to 3-dehydroquinate and 3-dehydroshikimate, respectively. This chain is Quinate/shikimate dehydrogenase (NAD(+)), found in Corynebacterium glutamicum (strain R).